The chain runs to 323 residues: Melanocortin receptor 3 (323 aa).

Residues 1–37 are Extracellular-facing; that stretch reads MNSSCCLSSVSPMLPNLSEHPAAPPASNRSGSGFCEQ. 3 N-linked (GlcNAc...) asparagine glycosylation sites follow: Asn-2, Asn-16, and Asn-28. Residues 38–63 form a helical membrane-spanning segment; the sequence is VFIKPEVFLALGIVSLMENILVILAV. Residues 64-75 lie on the Cytoplasmic side of the membrane; sequence VRNGNLHSPMYF. Residues 76–100 form a helical membrane-spanning segment; the sequence is FLCSLAAADMLVSLSNSLETIMIAV. Residues 101–118 lie on the Extracellular side of the membrane; that stretch reads INSDSLTLEDQFIQHMDN. A helical transmembrane segment spans residues 119 to 140; that stretch reads IFDSMICISLVASICNLLAIAI. Over 141-160 the chain is Cytoplasmic; that stretch reads DRYVTIFYALRYHSIMTVRK. The helical transmembrane segment at 161 to 181 threads the bilayer; the sequence is ALTLIGVIWVCCGICGVMFII. Residues 182 to 186 are Extracellular-facing; sequence YSESK. A helical membrane pass occupies residues 187–210; that stretch reads MVIVCLITMFFAMVLLMGTLYIHM. Residues 211–245 lie on the Cytoplasmic side of the membrane; it reads FLFARLHVQRIAVLPPAGVVAPQQHSCMKGAVTIT. A helical transmembrane segment spans residues 246 to 268; that stretch reads ILLGVFIFCWAPFFLHLVLIITC. Topologically, residues 269–277 are extracellular; the sequence is PTNPYCICY. A helical membrane pass occupies residues 278 to 301; that stretch reads TAHFNTYLVLIMCNSVIDPLIYAF. Topologically, residues 302–323 are cytoplasmic; that stretch reads RSLELRNTFKEILCGCNSMNLG. Cys-315 is lipidated: S-palmitoyl cysteine.

This sequence belongs to the G-protein coupled receptor 1 family. Brain.

The protein resides in the cell membrane. In terms of biological role, receptor for MSH (alpha, beta and gamma) and ACTH. This receptor is mediated by G proteins which activate adenylate cyclase. Required for expression of anticipatory patterns of activity and wakefulness during periods of limited nutrient availability and for the normal regulation of circadian clock activity in the brain. This chain is Melanocortin receptor 3 (Mc3r), found in Mus musculus (Mouse).